A 115-amino-acid polypeptide reads, in one-letter code: Evasin P1182 (115 aa).

The N-terminal stretch at 1–26 is a signal peptide; sequence MALNWSFRVIFVSTMWCALLKFATLG. 4 disulfides stabilise this stretch: C38–C58, C54–C94, C70–C99, and C89–C108. N-linked (GlcNAc...) asparagine glycans are attached at residues N45, N72, and N103.

Its subcellular location is the secreted. Its function is as follows. Salivary chemokine-binding protein which binds to host chemokines CCL2, CCL3, CCL4, CCL8 and CCL18. The sequence is that of Evasin P1182 from Amblyomma maculatum (Gulf Coast tick).